The primary structure comprises 162 residues: Caveolin-2 (162 aa).

The Cytoplasmic segment spans residues 1–86 (MGLETEKADV…FEISKYVIYK (86 aa)). Y19 is subject to Phosphotyrosine; by SRC. 2 positions are modified to phosphoserine: S20 and S23. A Phosphotyrosine; by SRC modification is found at Y27. S36 is subject to Phosphoserine. Residues 87–107 (FLTVFLAIPLAFIAGILFATL) constitute an intramembrane region (helical). Residues 108–162 (SCLHIWILMPFVKTCLMVLPSVQTIWKSVTDVVIGPLCTSVGRIFSSVSMQLSHD) lie on the Cytoplasmic side of the membrane.

It belongs to the caveolin family. In terms of assembly, monomer or homodimer. Interacts with CAV1; the interaction forms a stable heterooligomeric complex that is required for targeting to lipid rafts and for caveolae formation. Tyrosine phosphorylated forms do not form heterooligomers with the Tyr-19-phosphorylated form existing as a monomer or dimer and the Tyr-27-form as a monomer only. Interacts (tyrosine phosphorylated form) with the SH2 domain-containing proteins, RASA1, NCK1 and SRC. Interacts (tyrosine phosphorylated form) with INSR; the interaction (Tyr-27-phosphorylated form) is increased on insulin stimulation. Interacts (Tyr-19-phosphorylated form) with MAPK1 (phosphorylated form); the interaction, promoted by insulin, leads to nuclear location and MAPK1 activation. Interacts with STAT3; the interaction is increased on insulin-induced tyrosine phosphorylation leading to STAT activation. Post-translationally, phosphorylated on serine and tyrosine residues. CAV1 promotes phosphorylation on Ser-23 which targets the complex to the plasma membrane, lipid rafts and caveolae. Phosphorylation on Ser-36 appears to modulate mitosis in endothelial cells. Phosphorylation on both Tyr-19 and Tyr-27 is required for insulin-induced 'Ser-727' phosphorylation of STAT3 and its activation. Phosphorylation on Tyr-19 is required for insulin-induced phosphorylation of MAPK1 and DNA binding of STAT3. Tyrosine phosphorylation is induced by both EGF and insulin. As to expression, in the retina, mainly expressed in vessels, but also diffuse expression in the inner and outer plexiform layers and in the inner nuclear layer.

The protein localises to the nucleus. The protein resides in the cytoplasm. It localises to the golgi apparatus membrane. Its subcellular location is the cell membrane. It is found in the membrane. The protein localises to the caveola. In terms of biological role, may act as a scaffolding protein within caveolar membranes. Interacts directly with G-protein alpha subunits and can functionally regulate their activity. Acts as an accessory protein in conjunction with CAV1 in targeting to lipid rafts and driving caveolae formation. The Ser-36 phosphorylated form has a role in modulating mitosis in endothelial cells. Positive regulator of cellular mitogenesis of the MAPK signaling pathway. Required for the insulin-stimulated nuclear translocation and activation of MAPK1 and STAT3, and the subsequent regulation of cell cycle progression. This Rattus norvegicus (Rat) protein is Caveolin-2 (Cav2).